A 396-amino-acid chain; its full sequence is Elongation factor Tu (396 aa).

One can recognise a tr-type G domain in the interval Lys10–Glu206. The G1 stretch occupies residues Gly19–Thr26. Position 19–26 (Gly19–Thr26) interacts with GTP. Position 26 (Thr26) interacts with Mg(2+). The G2 stretch occupies residues Gly60–Asn64. The segment at Asp81–Gly84 is G3. Residues Asp81–His85 and Asn136–Asp139 each bind GTP. Positions Asn136 to Asp139 are G4. The segment at Ser174–Lys176 is G5.

The protein belongs to the TRAFAC class translation factor GTPase superfamily. Classic translation factor GTPase family. EF-Tu/EF-1A subfamily. In terms of assembly, monomer.

It localises to the cytoplasm. The catalysed reaction is GTP + H2O = GDP + phosphate + H(+). Functionally, GTP hydrolase that promotes the GTP-dependent binding of aminoacyl-tRNA to the A-site of ribosomes during protein biosynthesis. This Polaromonas naphthalenivorans (strain CJ2) protein is Elongation factor Tu.